The primary structure comprises 103 residues: MNKLTPDEAIDLAYDIFLEMAGENLDPADILLFNLQFEERGAVEMVETSENWDQEIGTLIDPDAFAEVWVGLVNDKDEMDDVFARFLISHDADNREYHVIWKE.

It belongs to the putative dsDNA mimic protein family.

In terms of biological role, may act as a double-stranded DNA (dsDNA) mimic. Probably regulates the activity of a dsDNA-binding protein. This Actinobacillus pleuropneumoniae serotype 3 (strain JL03) protein is Putative double-stranded DNA mimic protein APJL_1366.